A 216-amino-acid chain; its full sequence is Large ribosomal subunit protein uL3 (216 aa).

Disordered stretches follow at residues 89–108 (QRAS…VGGF) and 139–158 (NTHG…QCQS). At Gln157 the chain carries N5-methylglutamine.

The protein belongs to the universal ribosomal protein uL3 family. Part of the 50S ribosomal subunit. Forms a cluster with proteins L14 and L19. Methylated by PrmB.

In terms of biological role, one of the primary rRNA binding proteins, it binds directly near the 3'-end of the 23S rRNA, where it nucleates assembly of the 50S subunit. This Halorhodospira halophila (strain DSM 244 / SL1) (Ectothiorhodospira halophila (strain DSM 244 / SL1)) protein is Large ribosomal subunit protein uL3.